The chain runs to 186 residues: uncharacterized protein (186 aa).

The Cupin type-2 domain maps to 89–164 (LMSLGIGEDI…NTPLKLYSIY (76 aa)). 117–124 (GIVKMGKS) is a binding site for ATP.

This is an uncharacterized protein from Bacillus subtilis (strain 168).